The chain runs to 294 residues: C-type lectin domain family 4 member G (294 aa).

The Cytoplasmic portion of the chain corresponds to 1 to 30 (MNTGEYNKLGSAIEEVSRGQLGRWECYKQR). Residues 31–51 (LFFLVLALLVATVLWALILST) traverse the membrane as a helical; Signal-anchor for type II membrane protein segment. Residues 52–294 (LLSSASSKLR…WICEKRSSCY (243 aa)) lie on the Extracellular side of the membrane. N-linked (GlcNAc...) asparagine glycosylation occurs at asparagine 73. Residues 100–151 (AQLQTTLAEFKDIQAKLMEQESILKELQERVTQDLAKASRDRENIRSELFQA) are a coiled coil. Asparagine 159, asparagine 246, and asparagine 256 each carry an N-linked (GlcNAc...) asparagine glycan. The 116-residue stretch at 172-287 (FQGSCYYFSE…CTNERDGWIC (116 aa)) folds into the C-type lectin domain. Cysteine 264 and cysteine 278 form a disulfide bridge.

The protein resides in the cell membrane. Its function is as follows. Binds mannose, N-acetylglucosamine (GlcNAc) and fucose, but not galactose, in a Ca(2+)-dependent manner. The polypeptide is C-type lectin domain family 4 member G (Clec4g) (Mus musculus (Mouse)).